The chain runs to 125 residues: Prefoldin subunit beta (125 aa).

The protein belongs to the prefoldin subunit beta family. Heterohexamer of two alpha and four beta subunits.

Its subcellular location is the cytoplasm. Its function is as follows. Molecular chaperone capable of stabilizing a range of proteins. Seems to fulfill an ATP-independent, HSP70-like function in archaeal de novo protein folding. The protein is Prefoldin subunit beta of Halobacterium salinarum (strain ATCC 29341 / DSM 671 / R1).